The primary structure comprises 472 residues: Inactive CLIP domain-containing serine protease A3 (472 aa).

The next 2 helical transmembrane spans lie at 51 to 71 and 78 to 98; these read ISFVMCAIYYLQLYIKAWSSM and LPALGVLILLGTTWTPVHTYA. N-linked (GlcNAc...) asparagine glycans are attached at residues Asn-122, Asn-133, Asn-149, and Asn-152. The region spanning 223–470 is the Peptidase S1 domain; the sequence is VAAAKAPAAG…YVPWITSTVS (248 aa). 3 disulfides stabilise this stretch: Cys-354-Cys-428, Cys-386-Cys-408, and Cys-418-Cys-446.

It belongs to the peptidase S1 family. CLIP subfamily. As to expression, expressed at highest levels in head and salivary gland. Expressed in ovary and carcass. Minimal expression in midgut.

The protein localises to the membrane. Its function is as follows. Probable inactive serine protease. Induces migration of cultured mouse embryonic fibroblasts. In terms of biological role, (Microbial infection) Promotes dengue virus type 2 replication in the host. The sequence is that of Inactive CLIP domain-containing serine protease A3 from Aedes aegypti (Yellowfever mosquito).